We begin with the raw amino-acid sequence, 644 residues long: Polyglycine hydrolase (644 aa).

The signal sequence occupies residues 1-23 (MYTSRSLFSTLASCLSLATLVAS). Residues N100, N144, N159, N244, and N340 are each glycosylated (N-linked (GlcNAc...) asparagine). Residues C149 and C183 are joined by a disulfide bond. S369 is a catalytic residue. 4 N-linked (GlcNAc...) asparagine glycosylation sites follow: N389, N410, N443, and N486.

This sequence belongs to the peptidase S12 family.

The protein resides in the secreted. The catalysed reaction is a glycyl-glycyl-[protein] + H2O = N-terminal glycyl-[protein] + [protein]-C-terminal glycine. With respect to regulation, not inhibited by phenylmethylsulfonyl fluoride (PMSF; serine peptidase class S1 inhibitor), clavulanic acid (beta-lactamase inhibitor) or ampicillin (penicillin-binding protein (PBP) inhibitor). In terms of biological role, serine-type endopeptidase that cleaves Gly-Gly bonds in the polyglycine linker of host plant class IV chitinases to disrupt their chitin-binding, and thereby plays a role in lowering the defense responses of the host to the fungus. Degrades Z.mays Endochitinase A (CHIA). Has low proteolytic activity on Z.mays Endochitinase B (CHIB). This is Polyglycine hydrolase from Cochliobolus carbonum (strain 26-R-13) (Maize leaf spot fungus).